We begin with the raw amino-acid sequence, 417 residues long: Carboxypeptidase A2 (417 aa).

An N-terminal signal peptide occupies residues 1–16; that stretch reads MRLTPLLVALFGYIYC. Positions 17–112 are cleaved as a propeptide — activation peptide; that stretch reads QETFVGDQVL…EMLFNQQRER (96 aa). Residues 120–412 form the Peptidase M14 domain; that stretch reads AYHTLEEIYQ…LGLKTIMEHV (293 aa). Residues histidine 177 and glutamate 180 each coordinate Zn(2+). Substrate contacts are provided by residues 177-180, arginine 235, and 252-253; these read HARE and NR. Cysteine 246 and cysteine 269 are oxidised to a cystine. Residue histidine 304 participates in Zn(2+) binding. A substrate-binding site is contributed by 305-306; that stretch reads SY. Cysteine 318 and cysteine 352 are joined by a disulfide. A substrate-binding site is contributed by tyrosine 356. The active-site Proton donor/acceptor is glutamate 378.

This sequence belongs to the peptidase M14 family. Zn(2+) is required as a cofactor.

The protein resides in the secreted. The catalysed reaction is Similar to that of carboxypeptidase A (EC 3.4.17.1), but with a preference for bulkier C-terminal residues.. Carboxypeptidase that catalyzes the release of a C-terminal amino acid, with a preference for large aromatic C-terminal residues. The polypeptide is Carboxypeptidase A2 (Cpa2) (Mus musculus (Mouse)).